A 254-amino-acid chain; its full sequence is Transcription factor CAULIFLOWER (254 aa).

Residues 1 to 61 (MGRGRVEMKR…GKLFEYSSES (61 aa)) form the MADS-box domain. Positions 90–180 (QTNWSMEYSR…TKQIKERESI (91 aa)) constitute a K-box domain. Over residues 182 to 191 (RTHQNQSEQQ) the composition is skewed to polar residues. The segment at 182 to 205 (RTHQNQSEQQNRSHHVAPQPQPQL) is disordered.

Homodimer capable of binding to CArG-box sequences.

Its subcellular location is the nucleus. Probable transcription factor that promotes early floral meristem identity in synergy with APETALA1, FRUITFULL and LEAFY. Is required subsequently for the transition of an inflorescence meristem into a floral meristem. Seems to be partially redundant to the function of APETALA1. The chain is Transcription factor CAULIFLOWER (CAL) from Brassica rapa subsp. chinensis (Pak-choi).